An 882-amino-acid polypeptide reads, in one-letter code: Alanine--tRNA ligase (882 aa).

Zn(2+)-binding residues include His-570, His-574, Cys-672, and His-676.

It belongs to the class-II aminoacyl-tRNA synthetase family. Zn(2+) is required as a cofactor.

The protein resides in the cytoplasm. The enzyme catalyses tRNA(Ala) + L-alanine + ATP = L-alanyl-tRNA(Ala) + AMP + diphosphate. Functionally, catalyzes the attachment of alanine to tRNA(Ala) in a two-step reaction: alanine is first activated by ATP to form Ala-AMP and then transferred to the acceptor end of tRNA(Ala). Also edits incorrectly charged Ser-tRNA(Ala) and Gly-tRNA(Ala) via its editing domain. The protein is Alanine--tRNA ligase of Xanthomonas oryzae pv. oryzae (strain MAFF 311018).